The chain runs to 594 residues: Dictomallein-4 (594 aa).

Residues 1-18 (MKLVLIFLIINFLLIINC) form the signal peptide. The Peptidase M66 domain occupies 147 to 408 (PDVSQDYTLK…QNYFKNSIYY (262 aa)). Residue H300 participates in Zn(2+) binding. E301 is a catalytic residue. The Zn(2+) site is built by H304 and H310.

Belongs to the dictomallein family. It depends on Zn(2+) as a cofactor.

Its subcellular location is the secreted. The chain is Dictomallein-4 (dtmlD) from Dictyostelium discoideum (Social amoeba).